The chain runs to 190 residues: Pyridoxal 5'-phosphate synthase subunit PdxT (190 aa).

46 to 48 contacts L-glutamine; that stretch reads GES. C78 (nucleophile) is an active-site residue. L-glutamine-binding positions include R108 and 137–138; that span reads IR. Active-site charge relay system residues include H174 and E176.

This sequence belongs to the glutaminase PdxT/SNO family. As to quaternary structure, in the presence of PdxS, forms a dodecamer of heterodimers. Only shows activity in the heterodimer.

The catalysed reaction is aldehydo-D-ribose 5-phosphate + D-glyceraldehyde 3-phosphate + L-glutamine = pyridoxal 5'-phosphate + L-glutamate + phosphate + 3 H2O + H(+). It catalyses the reaction L-glutamine + H2O = L-glutamate + NH4(+). It participates in cofactor biosynthesis; pyridoxal 5'-phosphate biosynthesis. In terms of biological role, catalyzes the hydrolysis of glutamine to glutamate and ammonia as part of the biosynthesis of pyridoxal 5'-phosphate. The resulting ammonia molecule is channeled to the active site of PdxS. The sequence is that of Pyridoxal 5'-phosphate synthase subunit PdxT from Chloroflexus aggregans (strain MD-66 / DSM 9485).